The following is a 313-amino-acid chain: Ribosomal RNA small subunit methyltransferase H (313 aa).

S-adenosyl-L-methionine-binding positions include 36–38 (GGH), Asp-56, Phe-80, Asp-102, and Gln-109.

Belongs to the methyltransferase superfamily. RsmH family.

It localises to the cytoplasm. It carries out the reaction cytidine(1402) in 16S rRNA + S-adenosyl-L-methionine = N(4)-methylcytidine(1402) in 16S rRNA + S-adenosyl-L-homocysteine + H(+). Functionally, specifically methylates the N4 position of cytidine in position 1402 (C1402) of 16S rRNA. This Actinobacillus pleuropneumoniae serotype 7 (strain AP76) protein is Ribosomal RNA small subunit methyltransferase H.